Here is a 288-residue protein sequence, read N- to C-terminus: Bifunctional protein FolD (288 aa).

NADP(+) is bound by residues 166-168 (GAS) and Ile232.

It belongs to the tetrahydrofolate dehydrogenase/cyclohydrolase family. In terms of assembly, homodimer.

It catalyses the reaction (6R)-5,10-methylene-5,6,7,8-tetrahydrofolate + NADP(+) = (6R)-5,10-methenyltetrahydrofolate + NADPH. The catalysed reaction is (6R)-5,10-methenyltetrahydrofolate + H2O = (6R)-10-formyltetrahydrofolate + H(+). It functions in the pathway one-carbon metabolism; tetrahydrofolate interconversion. Functionally, catalyzes the oxidation of 5,10-methylenetetrahydrofolate to 5,10-methenyltetrahydrofolate and then the hydrolysis of 5,10-methenyltetrahydrofolate to 10-formyltetrahydrofolate. The polypeptide is Bifunctional protein FolD (Klebsiella pneumoniae (strain 342)).